Consider the following 185-residue polypeptide: MEYWSSSFIDGASSSSFISPFYNFDHFSGNQDNRCLGTMMGAQQDILHVPLAMVESGYGEESNSFNGQEKKKKKMTSEQLKFLERSFQEEIKLNPDRKMKLNPDRKMKLSKELGLQPRQIAVWFQNRKARWKNKQLEHLYESLRQEFDIVSREKELLQEELIQLKSMIREDSSCKKKQTWEKACS.

The homeobox DNA-binding region spans 76–135; it reads TSEQLKFLERSFQEEIKLNPDRKMKLNPDRKMKLSKELGLQPRQIAVWFQNRKARWKNKQ. The interval 136-164 is leucine-zipper; that stretch reads LEHLYESLRQEFDIVSREKELLQEELIQL.

This sequence belongs to the HD-ZIP homeobox family. Class I subfamily. As to expression, expressed in siliques.

Its subcellular location is the nucleus. Probable transcription factor. In Arabidopsis thaliana (Mouse-ear cress), this protein is Homeobox-leucine zipper protein ATHB-22 (ATHB-22).